A 638-amino-acid polypeptide reads, in one-letter code: Sodium- and chloride-dependent glycine transporter 1 (638 aa).

The tract at residues 1–29 is disordered; sequence MAAAQGPVAPSSLEQNGAVPSEATKKDQN. Residues 1-40 lie on the Cytoplasmic side of the membrane; sequence MAAAQGPVAPSSLEQNGAVPSEATKKDQNLKRGNWGNQIE. 3 helical membrane-spanning segments follow: residues 41–61, 69–88, and 112–132; these read FVLTSVGYAVGLGNVWRFPYL, AFMFPYFIMLIFCGIPLFFM, and GVGYGMMVVSTYIGIYYNVVI. Topologically, residues 133–219 are extracellular; the sequence is CIAFYYFFSS…DDIGNFGEVR (87 aa). Residues Asn169, Asn172, Asn182, and Asn188 are each glycosylated (N-linked (GlcNAc...) asparagine). Helical transmembrane passes span 220–238, 247–264, 300–317, 329–350, 383–402, 431–449, 465–485, 506–525, and 544–562; these read LPLLGCLGVSWVVVFLCLI, VVYFTATFPYVVLTILFI, IFYSLGCAWGGLVTMASY, VIISITNCATSVYAGFVIFSIL, LPISPLWSLLFFFMLILLGL, YVTLGVAVAGFLLGIPLTS, SFSLVIISCIMCVSIMYIYGH, ICWRFVSPAIIFFILIFSVI, and IGFLMALSSVICIPLYALF. Over 563–638 the chain is Cytoplasmic; the sequence is QFCRTDGDTL…GSSRFQDSRI (76 aa). The segment at 597–638 is disordered; it reads RYAPTTTPSPEDGLEVQPLHPDKAQIPMVGSNGSSRFQDSRI. Thr603 carries the post-translational modification Phosphothreonine. Phosphoserine occurs at positions 605 and 630. Positions 627-638 are essential for interaction with EXOC1; it reads SNGSSRFQDSRI. Over residues 627–638 the composition is skewed to polar residues; sequence SNGSSRFQDSRI.

Belongs to the sodium:neurotransmitter symporter (SNF) (TC 2.A.22) family. SLC6A9 subfamily. In terms of assembly, interacts with EXOC1; interaction increases the transporter capacity of SLC6A9 probably by promoting its insertion into the cell membrane. Interacts with EXOC3 and EXOC4.

It is found in the cell membrane. It carries out the reaction glycine(out) + chloride(out) + 2 Na(+)(out) = glycine(in) + chloride(in) + 2 Na(+)(in). Its function is as follows. Sodium- and chloride-dependent glycine transporter which is essential for regulating glycine concentrations at inhibitory glycinergic synapses. This is Sodium- and chloride-dependent glycine transporter 1 (SLC6A9) from Bos taurus (Bovine).